Reading from the N-terminus, the 280-residue chain is Mesaconyl-C(4)-CoA hydratase (280 aa).

This sequence belongs to the HTD2 family. In terms of assembly, homodimer.

The enzyme catalyses (3S)-citramalyl-CoA = 3-methylfumaryl-CoA + H2O. Its activity is regulated as follows. Inhibited by 3-methylfumaryl-CoA concentrations above 0.3 mM. In terms of biological role, involved in the glyoxylate assimilation cycle used to regenerate acetyl-CoA and produce pyruvate as universal precursor for biosynthesis. Catalyzes the hydration of 3-methylfumaryl-CoA (mesaconyl-C4-CoA) to (3S)-citramalyl-CoA. The chain is Mesaconyl-C(4)-CoA hydratase (meh) from Chloroflexus aurantiacus (strain ATCC 29366 / DSM 635 / J-10-fl).